A 364-amino-acid chain; its full sequence is UDP-N-acetylglucosamine--N-acetylmuramyl-(pentapeptide) pyrophosphoryl-undecaprenol N-acetylglucosamine transferase (364 aa).

Residues 10-12 (TGG), N123, S198, I251, and Q296 contribute to the UDP-N-acetyl-alpha-D-glucosamine site.

Belongs to the glycosyltransferase 28 family. MurG subfamily.

The protein localises to the cell membrane. It carries out the reaction di-trans,octa-cis-undecaprenyl diphospho-N-acetyl-alpha-D-muramoyl-L-alanyl-D-glutamyl-meso-2,6-diaminopimeloyl-D-alanyl-D-alanine + UDP-N-acetyl-alpha-D-glucosamine = di-trans,octa-cis-undecaprenyl diphospho-[N-acetyl-alpha-D-glucosaminyl-(1-&gt;4)]-N-acetyl-alpha-D-muramoyl-L-alanyl-D-glutamyl-meso-2,6-diaminopimeloyl-D-alanyl-D-alanine + UDP + H(+). The protein operates within cell wall biogenesis; peptidoglycan biosynthesis. Its function is as follows. Cell wall formation. Catalyzes the transfer of a GlcNAc subunit on undecaprenyl-pyrophosphoryl-MurNAc-pentapeptide (lipid intermediate I) to form undecaprenyl-pyrophosphoryl-MurNAc-(pentapeptide)GlcNAc (lipid intermediate II). This chain is UDP-N-acetylglucosamine--N-acetylmuramyl-(pentapeptide) pyrophosphoryl-undecaprenol N-acetylglucosamine transferase, found in Exiguobacterium sibiricum (strain DSM 17290 / CCUG 55495 / CIP 109462 / JCM 13490 / 255-15).